Reading from the N-terminus, the 470-residue chain is Alpha-galactosidase (470 aa).

The N-terminal stretch at 1-18 (MFSLLLLTSTALVETALG) is a signal peptide. A disulfide bridge connects residues Cys-42 and Cys-74. N-linked (GlcNAc...) asparagine glycosylation occurs at Asn-43. 2 residues coordinate substrate: Asp-72 and Asp-73. Asn-82 carries an N-linked (GlcNAc...) asparagine glycan. Cys-121 and Cys-151 are oxidised to a cystine. A substrate-binding site is contributed by Lys-147. Asp-149 serves as the catalytic Nucleophile. N-linked (GlcNAc...) asparagine glycosylation is present at Asn-175. Substrate is bound at residue Arg-205. Catalysis depends on Asp-209, which acts as the Proton donor. Intrachain disulfides connect Cys-221-Cys-237 and Cys-223-Cys-230. Gln-251 provides a ligand contact to substrate. N-linked (GlcNAc...) asparagine glycosylation is found at Asn-270, Asn-388, Asn-413, Asn-422, Asn-435, and Asn-454.

It belongs to the glycosyl hydrolase 27 family. In terms of assembly, homotetramer.

It localises to the secreted. The enzyme catalyses Hydrolysis of terminal, non-reducing alpha-D-galactose residues in alpha-D-galactosides, including galactose oligosaccharides, galactomannans and galactolipids.. This Zygotorulaspora mrakii (Zygosaccharomyces mrakii) protein is Alpha-galactosidase (MEL).